A 351-amino-acid chain; its full sequence is Photosystem II D2 protein (351 aa).

The helical transmembrane segment at Thr39–Thr59 threads the bilayer. His116 is a binding site for chlorophyll a. The helical transmembrane segment at Gly123 to Pro139 threads the bilayer. Residues Gln128 and Asn141 each contribute to the pheophytin a site. A helical membrane pass occupies residues Val151–Ala164. His196 is a chlorophyll a binding site. Residues Gly206–Asp226 traverse the membrane as a helical segment. Residues His213 and Phe260 each contribute to the a plastoquinone site. Position 213 (His213) interacts with Fe cation. Position 267 (His267) interacts with Fe cation. Residues Gly277–Arg293 traverse the membrane as a helical segment.

Belongs to the reaction center PufL/M/PsbA/D family. As to quaternary structure, PSII is composed of 1 copy each of membrane proteins PsbA, PsbB, PsbC, PsbD, PsbE, PsbF, PsbH, PsbI, PsbJ, PsbK, PsbL, PsbM, PsbT, PsbX, PsbY, PsbZ, Psb30/Ycf12, at least 3 peripheral proteins of the oxygen-evolving complex and a large number of cofactors. It forms dimeric complexes. The cofactor is The D1/D2 heterodimer binds P680, chlorophylls that are the primary electron donor of PSII, and subsequent electron acceptors. It shares a non-heme iron and each subunit binds pheophytin, quinone, additional chlorophylls, carotenoids and lipids. There is also a Cl(-1) ion associated with D1 and D2, which is required for oxygen evolution. The PSII complex binds additional chlorophylls, carotenoids and specific lipids..

It is found in the plastid. It localises to the chloroplast thylakoid membrane. The catalysed reaction is 2 a plastoquinone + 4 hnu + 2 H2O = 2 a plastoquinol + O2. Photosystem II (PSII) is a light-driven water:plastoquinone oxidoreductase that uses light energy to abstract electrons from H(2)O, generating O(2) and a proton gradient subsequently used for ATP formation. It consists of a core antenna complex that captures photons, and an electron transfer chain that converts photonic excitation into a charge separation. The D1/D2 (PsbA/PsbD) reaction center heterodimer binds P680, the primary electron donor of PSII as well as several subsequent electron acceptors. D2 is needed for assembly of a stable PSII complex. The sequence is that of Photosystem II D2 protein from Phaeodactylum tricornutum (strain CCAP 1055/1).